Reading from the N-terminus, the 178-residue chain is Endothelin-2 (178 aa).

A signal peptide spans 1 to 26; sequence MVAMPTAWCSIALALLLALHEGKGQV. Positions 27–46 are excised as a propeptide; sequence AAAPDQPAPSHRARASHLRP. 2 cysteine pairs are disulfide-bonded: Cys49–Cys63 and Cys51–Cys59. The propeptide occupies 70-178; sequence VNTPGQTAPY…RPTHSRRWKR (109 aa). Residues 96-111 form an endothelin-like region; sequence CECSSGRDPACATFCH.

This sequence belongs to the endothelin/sarafotoxin family.

It localises to the secreted. Functionally, endothelins are endothelium-derived vasoconstrictor peptides. This chain is Endothelin-2 (EDN2), found in Felis catus (Cat).